The sequence spans 292 residues: Elongation factor Ts (292 aa).

The segment at 80 to 83 is involved in Mg(2+) ion dislocation from EF-Tu; the sequence is TDFV.

The protein belongs to the EF-Ts family.

It localises to the cytoplasm. Its function is as follows. Associates with the EF-Tu.GDP complex and induces the exchange of GDP to GTP. It remains bound to the aminoacyl-tRNA.EF-Tu.GTP complex up to the GTP hydrolysis stage on the ribosome. The polypeptide is Elongation factor Ts (Cupriavidus metallidurans (strain ATCC 43123 / DSM 2839 / NBRC 102507 / CH34) (Ralstonia metallidurans)).